Here is a 57-residue protein sequence, read N- to C-terminus: Large ribosomal subunit protein bL32 (57 aa).

The disordered stretch occupies residues 1–21; that stretch reads MAVPKRRTSKKVKNQRRTHKK.

This sequence belongs to the bacterial ribosomal protein bL32 family.

The chain is Large ribosomal subunit protein bL32 from Oceanobacillus iheyensis (strain DSM 14371 / CIP 107618 / JCM 11309 / KCTC 3954 / HTE831).